We begin with the raw amino-acid sequence, 1572 residues long: MPVGVEARASWRVVALTLLLLPAVPAASQPLPPRPLQPSMPHVCAEQKLTLVGHRQPCVQAFSRVVPVWRSGCGQQAWCVGQERRTVYYMSYRQVYATEARTVFRCCPGWSQKPGQEGCLSDVDECANANGGCEGPCCNTVGGFYCRCPPGYQLQGDGKTCQDVDECRSHNGGCQHRCVNTPGSYLCECKPGFRLHTDGRTCLAISSCTLGNGGCQHQCVQLTVTQHRCQCRPQYQLQEDGRRCVRRSPCADGNGGCMHTCQELRGLAHCGCHPGYQLAADRKACEDVDECALGLAQCAHGCLNTQGSFKCVCHAGYELGADGRQCYRIEMEIVNSCEAGNGGCSHGCSHTSTGPLCTCPRGYELDEDQKTCIDIDDCANSPCCQQVCANTPGGYECSCFAGYRLNTDGCGCEDVDECASGHSGCEHHCSNLAGSFQCFCEAGYRLDEDRRGCTPLEESVVDLDGQLPFVRPLPHIAVLGDELPQLFQDDYGAEEEAVAELRGEHTLTEKFVCLDHSFGHDCSLTCDDCRNGGTCFPGLDGCDCPEGWTGIICNETCPPDTFGKNCSSPCICQNGGTCDPVSGACRCPPGVSGAHCEDGCPKGFYGKHCRKKCHCANRGRCHRLYGACLCDPGLYGRFCHLACPPWAFGPGCSEDCLCEQSHTRSCNSKDGSCSCKAGFQGERCEAECEPGSFGPGCRNRCTCRPGVACDPVSGECRTQCPPGYQGEDCGQECPVGTFGVNCSGSCSCVGAPCHRVTGECLCPPGKTGEDCGADCPEGRWGLGCQEICPACEHGASCDPETGTCLCLPGFVGSRCQDACPAGWFGTGCQMRCACANDGHCHPATGRCSCAPGWTGLSCQRACDSGHWGPDCIHPCNCSAGHGNCDAVSGLCLCEAGYEGPQCEQWCRQGYFGPGCEQKCRCEHGATCDHVSGACTCPAGWRGSFCEHACPAGFFGLDCGSACNCSAGAPCDAVTGSCICPAGRWGPHCAQTCPPLTFGLNCSQICTCFNGASCDPVLGQCHCAPGWMGPTCLQACPAGLYGKNCQHSCLCRNGGSCDPILGQCTCPEGWTGLACENECLPGHHGAGCRLNCSCLNGGTCDRLTGHCRCPAGWTGDKCQSPCVSGMFGVHCEEHCACRKGATCHHVTGACLCPPGWRGSHCEQACPRGWFGEACAQRCHCPPGASCHHVSGECHCPPGFTGPGCEQACQPGTFGKDCEHPCQCPGETWACHPASGACVCAAGYHGTDCQQRCPSGRYGPGCEQICKCLNGGTCDPATGACYCPAGFLGADCSLACPQGRFGPSCAHVCTCGQGAACDPVSGTCICPPGKTGGHCERGCPQDRFGKGCEHKCACRNGGLCHATNGSCSCPLGWMGPHCEHACPAGRYGAACLLECSCQNNGSCEPTSGACLCGPGFYGQACEDTCPAGFHGSGCQRVCECQQGAPCDPVSGRCLCPAGFRGQFCERGCKPGFFGDGCLQQCNSPTGVPCDPISGLCLCPPGRAGTTCDLDCRRGRFGPGCALRCDCGGGADCDPISGQCHCVDSYTGPTCREVPTQLSSIRPAPQHSSSKAMKH.

Positions 1–26 (MPVGVEARASWRVVALTLLLLPAVPA) are cleaved as a signal peptide. The EMI domain maps to 40–121 (MPHVCAEQKL…QKPGQEGCLS (82 aa)). 36 disulfide bridges follow: C44–C107, C73–C79, C106–C119, C126–C137, C133–C146, C148–C161, C167–C178, C174–C187, C189–C202, C291–C302, C298–C311, C313–C326, C418–C429, C425–C438, C440–C453, C522–C535, C529–C542, C544–C553, C566–C578, C572–C585, C587–C596, C609–C621, C615–C628, C630–C639, C788–C797, C791–C804, C806–C815, C832–C840, C834–C847, C849–C858, C871–C884, C875–C891, C893–C902, C915–C927, C921–C934, and C936–C945. Residues 122–162 (DVDECANANGGCEGPCCNTVGGFYCRCPPGYQLQGDGKTCQ) form the EGF-like 1; calcium-binding domain. In terms of domain architecture, EGF-like 2; calcium-binding spans 163-203 (DVDECRSHNGGCQHRCVNTPGSYLCECKPGFRLHTDGRTCL). Residues 287–327 (DVDECALGLAQCAHGCLNTQGSFKCVCHAGYELGADGRQCY) enclose the EGF-like 3; calcium-binding domain. Positions 414 to 454 (DVDECASGHSGCEHHCSNLAGSFQCFCEAGYRLDEDRRGCT) constitute an EGF-like 4; calcium-binding domain. EGF-like domains follow at residues 518-554 (FGHD…IICN), 562-597 (FGKN…AHCE), 605-640 (YGKH…RFCH), 785-816 (QEIC…SRCQ), 829-859 (QMRC…LSCQ), 867-903 (WGPD…PQCE), 911-946 (FGPG…SFCE), 997-1032 (FGLN…PTCL), 1040-1075 (YGKN…LACE), 1083-1118 (HGAG…DKCQ), 1131-1161 (EEHC…SHCE), 1169-1204 (FGEA…PGCE), 1256-1291 (YGPG…ADCS), 1299-1334 (FGPS…GHCE), 1342-1377 (FGKG…PHCE), 1390-1420 (LLEC…QACE), and 1428-1463 (HGSG…QFCE). N-linked (GlcNAc...) asparagine glycosylation is present at N1000. Cystine bridges form between C1001/C1013, C1007/C1020, C1022/C1031, C1044/C1056, C1050/C1063, C1065/C1074, C1087/C1099, C1093/C1106, C1108/C1117, C1134/C1142, C1136/C1149, C1151/C1160, C1173/C1185, C1177/C1192, C1194/C1203, C1260/C1272, C1266/C1279, C1281/C1290, C1303/C1315, C1309/C1322, C1324/C1333, C1346/C1358, C1352/C1365, C1367/C1376, C1393/C1401, C1395/C1408, C1410/C1419, C1432/C1444, C1438/C1451, and C1453/C1462.

It is found in the secreted. The polypeptide is Multiple epidermal growth factor-like domains protein 6 (Megf6) (Mus musculus (Mouse)).